The following is a 98-amino-acid chain: Transcription elongation factor A protein-like 7 (98 aa).

Residues 1–22 (MQKSCNEKEGKPKGSEAKREDE) show a composition bias toward basic and acidic residues. The segment at 1–33 (MQKSCNEKEGKPKGSEAKREDEQPCGALEGQRL) is disordered. The stretch at 59–89 (GEEMTGEEEEMERCLEEIRSLRKKFRALHSN) forms a coiled coil.

Belongs to the TFS-II family. TFA subfamily.

The protein resides in the nucleus. In terms of biological role, plays a role in the negative regulation of NF-kappa-B signaling at the basal level by modulating transcriptional activity of NF-kappa-B on its target gene promoters. Associates with cyclin D1 promoter containing Myc E-box sequence and transcriptionally represses cyclin D1 expression. Regulates telomerase reverse transcriptase expression and telomerase activity in both ALT (alternative lengthening of telomeres)and telomerase-positive cell lines. This chain is Transcription elongation factor A protein-like 7 (Tceal7), found in Mus musculus (Mouse).